A 467-amino-acid polypeptide reads, in one-letter code: Replication factor C large subunit (467 aa).

47–54 serves as a coordination point for ATP; the sequence is GPPGVGKT.

Belongs to the activator 1 small subunits family. RfcL subfamily. As to quaternary structure, heteromultimer composed of small subunits (RfcS) and large subunits (RfcL).

In terms of biological role, part of the RFC clamp loader complex which loads the PCNA sliding clamp onto DNA. This Methanothrix thermoacetophila (strain DSM 6194 / JCM 14653 / NBRC 101360 / PT) (Methanosaeta thermophila) protein is Replication factor C large subunit.